The following is a 339-amino-acid chain: Ribosomal RNA small subunit methyltransferase C (339 aa).

The protein belongs to the methyltransferase superfamily. RsmC family. As to quaternary structure, monomer.

It localises to the cytoplasm. The enzyme catalyses guanosine(1207) in 16S rRNA + S-adenosyl-L-methionine = N(2)-methylguanosine(1207) in 16S rRNA + S-adenosyl-L-homocysteine + H(+). In terms of biological role, specifically methylates the guanine in position 1207 of 16S rRNA in the 30S particle. The protein is Ribosomal RNA small subunit methyltransferase C of Aliivibrio fischeri (strain MJ11) (Vibrio fischeri).